The sequence spans 315 residues: Lipoyl synthase (315 aa).

[4Fe-4S] cluster is bound by residues C62, C67, C73, C88, C92, C95, and S302. Residues 74–291 (FGKGTATFMI…ETEALAMGFK (218 aa)) enclose the Radical SAM core domain.

Belongs to the radical SAM superfamily. Lipoyl synthase family. [4Fe-4S] cluster is required as a cofactor.

Its subcellular location is the cytoplasm. The enzyme catalyses [[Fe-S] cluster scaffold protein carrying a second [4Fe-4S](2+) cluster] + N(6)-octanoyl-L-lysyl-[protein] + 2 oxidized [2Fe-2S]-[ferredoxin] + 2 S-adenosyl-L-methionine + 4 H(+) = [[Fe-S] cluster scaffold protein] + N(6)-[(R)-dihydrolipoyl]-L-lysyl-[protein] + 4 Fe(3+) + 2 hydrogen sulfide + 2 5'-deoxyadenosine + 2 L-methionine + 2 reduced [2Fe-2S]-[ferredoxin]. It participates in protein modification; protein lipoylation via endogenous pathway; protein N(6)-(lipoyl)lysine from octanoyl-[acyl-carrier-protein]: step 2/2. In terms of biological role, catalyzes the radical-mediated insertion of two sulfur atoms into the C-6 and C-8 positions of the octanoyl moiety bound to the lipoyl domains of lipoate-dependent enzymes, thereby converting the octanoylated domains into lipoylated derivatives. This is Lipoyl synthase from Aromatoleum aromaticum (strain DSM 19018 / LMG 30748 / EbN1) (Azoarcus sp. (strain EbN1)).